The sequence spans 467 residues: UPF0236 protein TTE0610/TTE0881/TTE1053/TTE2432 (467 aa).

The protein belongs to the UPF0236 family.

The chain is UPF0236 protein TTE0610/TTE0881/TTE1053/TTE2432 from Caldanaerobacter subterraneus subsp. tengcongensis (strain DSM 15242 / JCM 11007 / NBRC 100824 / MB4) (Thermoanaerobacter tengcongensis).